The chain runs to 146 residues: Small ribosomal subunit protein eS19 (146 aa).

This sequence belongs to the eukaryotic ribosomal protein eS19 family.

The protein is Small ribosomal subunit protein eS19 (RPS19A) of Oryza sativa subsp. japonica (Rice).